Here is a 231-residue protein sequence, read N- to C-terminus: Ribonuclease HII (231 aa).

One can recognise an RNase H type-2 domain in the interval 38-227 (ELVAGGDEAG…IKSFYGQLKL (190 aa)). Residues aspartate 44, glutamate 45, and aspartate 136 each coordinate a divalent metal cation.

This sequence belongs to the RNase HII family. Requires Mn(2+) as cofactor. It depends on Mg(2+) as a cofactor.

The protein resides in the cytoplasm. It carries out the reaction Endonucleolytic cleavage to 5'-phosphomonoester.. In terms of biological role, endonuclease that specifically degrades the RNA of RNA-DNA hybrids. The protein is Ribonuclease HII of Carboxydothermus hydrogenoformans (strain ATCC BAA-161 / DSM 6008 / Z-2901).